The following is a 205-amino-acid chain: Cytochrome c biogenesis ATP-binding export protein CcmA (205 aa).

The region spanning 2–204 (LEVSNLTAIR…SPKLRKIKLG (203 aa)) is the ABC transporter domain. 34–41 (GRNGTGKT) contributes to the ATP binding site.

It belongs to the ABC transporter superfamily. CcmA exporter (TC 3.A.1.107) family. As to quaternary structure, the complex is composed of two ATP-binding proteins (CcmA) and two transmembrane proteins (CcmB).

The protein resides in the cell inner membrane. It catalyses the reaction heme b(in) + ATP + H2O = heme b(out) + ADP + phosphate + H(+). Functionally, part of the ABC transporter complex CcmAB involved in the biogenesis of c-type cytochromes; once thought to export heme, this seems not to be the case, but its exact role is uncertain. Responsible for energy coupling to the transport system. This is Cytochrome c biogenesis ATP-binding export protein CcmA from Vibrio vulnificus (strain YJ016).